A 78-amino-acid polypeptide reads, in one-letter code: Acyl carrier protein (78 aa).

Residues 4-78 (AEIRDKVYDI…QQAIDYIVKK (75 aa)) enclose the Carrier domain. Ser39 bears the O-(pantetheine 4'-phosphoryl)serine mark.

This sequence belongs to the acyl carrier protein (ACP) family. 4'-phosphopantetheine is transferred from CoA to a specific serine of apo-ACP by AcpS. This modification is essential for activity because fatty acids are bound in thioester linkage to the sulfhydryl of the prosthetic group.

It localises to the cytoplasm. Its pathway is lipid metabolism; fatty acid biosynthesis. Functionally, carrier of the growing fatty acid chain in fatty acid biosynthesis. This Chlorobium luteolum (strain DSM 273 / BCRC 81028 / 2530) (Pelodictyon luteolum) protein is Acyl carrier protein.